The primary structure comprises 318 residues: Methionyl-tRNA formyltransferase (318 aa).

110-113 provides a ligand contact to (6S)-5,6,7,8-tetrahydrofolate; that stretch reads SLLP.

This sequence belongs to the Fmt family.

The enzyme catalyses L-methionyl-tRNA(fMet) + (6R)-10-formyltetrahydrofolate = N-formyl-L-methionyl-tRNA(fMet) + (6S)-5,6,7,8-tetrahydrofolate + H(+). Attaches a formyl group to the free amino group of methionyl-tRNA(fMet). The formyl group appears to play a dual role in the initiator identity of N-formylmethionyl-tRNA by promoting its recognition by IF2 and preventing the misappropriation of this tRNA by the elongation apparatus. This Latilactobacillus sakei subsp. sakei (strain 23K) (Lactobacillus sakei subsp. sakei) protein is Methionyl-tRNA formyltransferase.